The sequence spans 204 residues: Small ribosomal subunit protein uS4 (204 aa).

An S4 RNA-binding domain is found at 92 to 156 (RRLDALVLRS…SKVPFQVARE (65 aa)).

The protein belongs to the universal ribosomal protein uS4 family. In terms of assembly, part of the 30S ribosomal subunit. Contacts protein S5. The interaction surface between S4 and S5 is involved in control of translational fidelity.

One of the primary rRNA binding proteins, it binds directly to 16S rRNA where it nucleates assembly of the body of the 30S subunit. Functionally, with S5 and S12 plays an important role in translational accuracy. The sequence is that of Small ribosomal subunit protein uS4 from Streptomyces griseus subsp. griseus (strain JCM 4626 / CBS 651.72 / NBRC 13350 / KCC S-0626 / ISP 5235).